A 1390-amino-acid polypeptide reads, in one-letter code: DNA-directed RNA polymerase III subunit RPC1 (1390 aa).

The Zn(2+) site is built by Cys69, Cys72, Cys79, His82, Cys109, and Cys112. Residue Lys144 participates in DNA binding. Residues Cys156 and Cys159 each coordinate Zn(2+). Positions 167, 326, 348, 353, 360, and 366 each coordinate DNA. The residue at position 445 (Lys445) is an N6-acetyllysine. Position 464 (Arg464) interacts with RNA. Mg(2+) is bound by residues Asp499, Asp501, and Asp503. Position 503 (Asp503) interacts with RNA. Positions Pro844–Glu856 are bridging helix. DNA-binding residues include Arg1159, Arg1305, and Lys1323.

The protein belongs to the RNA polymerase beta' chain family. As to quaternary structure, component of the RNA polymerase III (Pol III) complex consisting of 17 subunits: a ten-subunit catalytic core composed of POLR3A/RPC1, POLR3B/RPC2, POLR1C/RPAC1, POLR1D/RPAC2, POLR3K/RPC10, POLR2E/RPABC1, POLR2F/RPABC2, POLR2H/RPABC3, POLR2K/RPABC4 and POLR2L/RPABC5; a mobile stalk composed of two subunits POLR3H/RPC8 and CRCP/RPC9, protruding from the core and functioning primarily in transcription initiation; and additional subunits homologous to general transcription factors of the RNA polymerase II machinery, POLR3C/RPC3-POLR3F/RPC6-POLR3G/RPC7 heterotrimer required for transcription initiation and POLR3D/RPC4-POLR3E/RPC5 heterodimer involved in both transcription initiation and termination. As part of the RNA polymerase III complex, interacts with PKP2. The cofactor is Mg(2+).

The protein resides in the nucleus. The protein localises to the cytoplasm. It is found in the cytosol. The catalysed reaction is RNA(n) + a ribonucleoside 5'-triphosphate = RNA(n+1) + diphosphate. In terms of biological role, catalytic core component of RNA polymerase III (Pol III), a DNA-dependent RNA polymerase which synthesizes small non-coding RNAs using the four ribonucleoside triphosphates as substrates. Synthesizes 5S rRNA, snRNAs, tRNAs and miRNAs from at least 500 distinct genomic loci. Pol III-mediated transcription cycle proceeds through transcription initiation, transcription elongation and transcription termination stages. During transcription initiation, Pol III is recruited to DNA promoters type I, II or III with the help of general transcription factors and other specific initiation factors. Once the polymerase has escaped from the promoter it enters the elongation phase during which RNA is actively polymerized, based on complementarity with the template DNA strand. Transcription termination involves the release of the RNA transcript and polymerase from the DNA. Forms Pol III active center together with the second largest subunit POLR3B/RPC2. Appends one nucleotide at a time to the 3' end of the nascent RNA, with POLR3A/RPC1 contributing a Mg(2+)-coordinating DxDGD motif, and POLR3B/RPC2 participating in the coordination of a second Mg(2+) ion and providing lysine residues believed to facilitate Watson-Crick base pairing between the incoming nucleotide and template base. Typically, Mg(2+) ions direct a 5' nucleoside triphosphate to form a phosphodiester bond with the 3' hydroxyl of the preceding nucleotide of the nascent RNA, with the elimination of pyrophosphate. Pol III plays a key role in sensing and limiting infection by intracellular bacteria and DNA viruses. Acts as a nuclear and cytosolic DNA sensor involved in innate immune response. Can sense non-self dsDNA that serves as template for transcription into dsRNA. The non-self RNA polymerase III transcripts, such as Epstein-Barr virus-encoded RNAs (EBERs) induce type I interferon and NF-kappa-B through the RIG-I pathway. This Bos taurus (Bovine) protein is DNA-directed RNA polymerase III subunit RPC1.